The sequence spans 603 residues: Elongation factor 4 (603 aa).

Residues 7-189 (SRLRNFCIIA…AVVDRIPSPK (183 aa)) enclose the tr-type G domain. Residues 19–24 (DHGKST) and 136–139 (NKVD) each bind GTP.

The protein belongs to the TRAFAC class translation factor GTPase superfamily. Classic translation factor GTPase family. LepA subfamily.

The protein localises to the cell inner membrane. The enzyme catalyses GTP + H2O = GDP + phosphate + H(+). Its function is as follows. Required for accurate and efficient protein synthesis under certain stress conditions. May act as a fidelity factor of the translation reaction, by catalyzing a one-codon backward translocation of tRNAs on improperly translocated ribosomes. Back-translocation proceeds from a post-translocation (POST) complex to a pre-translocation (PRE) complex, thus giving elongation factor G a second chance to translocate the tRNAs correctly. Binds to ribosomes in a GTP-dependent manner. The polypeptide is Elongation factor 4 (Prochlorococcus marinus (strain NATL1A)).